A 98-amino-acid polypeptide reads, in one-letter code: Large ribosomal subunit protein uL23 (98 aa).

It belongs to the universal ribosomal protein uL23 family. In terms of assembly, part of the 50S ribosomal subunit. Contacts protein L29, and trigger factor when it is bound to the ribosome.

In terms of biological role, one of the early assembly proteins it binds 23S rRNA. One of the proteins that surrounds the polypeptide exit tunnel on the outside of the ribosome. Forms the main docking site for trigger factor binding to the ribosome. The polypeptide is Large ribosomal subunit protein uL23 (Ruegeria sp. (strain TM1040) (Silicibacter sp.)).